The sequence spans 437 residues: MQVSVETTSGLERRVTVGVPAEKVDVAVEGKLQEAQKTIRLDGFRPGKVPMREVKRRFGGAVRNEVLADVMREAFIEAVEQEKLQPAGMPGFEATTNEAGKDLEFVATFEVYPQVELAAFDSIEVEKPQSEVTDADVDTMIETLRQQRAEFADVDRASEIGDRVNIDFKGLKDGEAFEGGTAEGQNLELGSGQMIPGFEDGIVGMKAGEEKDIDVTFPEDYQSEDLKGQAVVFHIKVNKVEGKALPEVDAEFMKGFGVDDGDETKFKAEVRKNMERELKNAITSKVKEQAMDGLVNLHEFDLPGALVTQEIQRMRQQMMQQFGGGQQFDPSILPDDLFKEQAERSVRLGLVVRAILDKNEIKADADKVKARVEEISEQYEKPEEVVSWVYSNPQQLQQIEGAILEEQVVDLVLESAKVEEKTMPYQDAVKPREQADG.

The PPIase FKBP-type domain occupies Gly-161–Pro-246.

The protein belongs to the FKBP-type PPIase family. Tig subfamily.

Its subcellular location is the cytoplasm. The enzyme catalyses [protein]-peptidylproline (omega=180) = [protein]-peptidylproline (omega=0). Its function is as follows. Involved in protein export. Acts as a chaperone by maintaining the newly synthesized protein in an open conformation. Functions as a peptidyl-prolyl cis-trans isomerase. In Alcanivorax borkumensis (strain ATCC 700651 / DSM 11573 / NCIMB 13689 / SK2), this protein is Trigger factor.